Consider the following 470-residue polypeptide: L-seryl-tRNA(Sec) selenium transferase (470 aa).

Lys292 carries the N6-(pyridoxal phosphate)lysine modification.

Belongs to the SelA family. The cofactor is pyridoxal 5'-phosphate.

The protein resides in the cytoplasm. The catalysed reaction is L-seryl-tRNA(Sec) + selenophosphate + H(+) = L-selenocysteinyl-tRNA(Sec) + phosphate. It participates in aminoacyl-tRNA biosynthesis; selenocysteinyl-tRNA(Sec) biosynthesis; selenocysteinyl-tRNA(Sec) from L-seryl-tRNA(Sec) (bacterial route): step 1/1. In terms of biological role, converts seryl-tRNA(Sec) to selenocysteinyl-tRNA(Sec) required for selenoprotein biosynthesis. The sequence is that of L-seryl-tRNA(Sec) selenium transferase from Moorella thermoacetica (strain ATCC 39073 / JCM 9320).